The sequence spans 372 residues: UDP-2-acetamido-2,6-beta-L-arabino-hexul-4-ose reductase (372 aa).

Residues 7–30 (GANGFVGRNLCAHLAERGGIEVVP), leucine 53, tyrosine 103, and lysine 107 each bind NAD(+). Tyrosine 103 acts as the Proton acceptor in catalysis. Residues asparagine 132 and 279 to 282 (HPGV) each bind substrate.

It belongs to the NAD(P)-dependent epimerase/dehydratase family. As to quaternary structure, homodimer.

It carries out the reaction UDP-2-acetamido-2,6-dideoxy-beta-L-arabino-hex-4-ulose + NADH + H(+) = UDP-2-acetamido-2,6-dideoxy-beta-L-talose + NAD(+). It catalyses the reaction UDP-2-acetamido-2,6-dideoxy-beta-L-arabino-hex-4-ulose + NADPH + H(+) = UDP-2-acetamido-2,6-dideoxy-beta-L-talose + NADP(+). Its pathway is bacterial outer membrane biogenesis; LPS O-antigen biosynthesis. Its function is as follows. Bifunctional enzyme that mediates C-3 epimerization of the second intermediate followed by reduction at C-4 during serogroup O11 O-antigen biosynthesis, thus catalyzing the conversion of UDP-N-acetyl-D-glucosamine to precursors for the biosynthesis of O antigen. This chain is UDP-2-acetamido-2,6-beta-L-arabino-hexul-4-ose reductase, found in Pseudomonas aeruginosa (strain ATCC 29260 / BCRC 12902 / CIP 102967 / NCIMB 11965 / PA103).